We begin with the raw amino-acid sequence, 431 residues long: Tyrosine--tRNA ligase (431 aa).

Tyr33 contacts L-tyrosine. Residues 38-47 (PTADSLHIGS) carry the 'HIGH' region motif. The L-tyrosine site is built by Tyr172 and Gln176. The 'KMSKS' region signature appears at 234–238 (KFGKS). Lys237 is a binding site for ATP. The 68-residue stretch at 364–431 (INIVEVLNEK…KKNYFVLNVK (68 aa)) folds into the S4 RNA-binding domain.

It belongs to the class-I aminoacyl-tRNA synthetase family. TyrS type 1 subfamily. As to quaternary structure, homodimer.

It localises to the cytoplasm. The catalysed reaction is tRNA(Tyr) + L-tyrosine + ATP = L-tyrosyl-tRNA(Tyr) + AMP + diphosphate + H(+). Its function is as follows. Catalyzes the attachment of tyrosine to tRNA(Tyr) in a two-step reaction: tyrosine is first activated by ATP to form Tyr-AMP and then transferred to the acceptor end of tRNA(Tyr). In Flavobacterium psychrophilum (strain ATCC 49511 / DSM 21280 / CIP 103535 / JIP02/86), this protein is Tyrosine--tRNA ligase.